The chain runs to 397 residues: Phosphopentomutase (397 aa).

The Mn(2+) site is built by D10, D296, H301, D337, H338, and H349.

It belongs to the phosphopentomutase family. Requires Mn(2+) as cofactor.

The protein resides in the cytoplasm. It catalyses the reaction 2-deoxy-alpha-D-ribose 1-phosphate = 2-deoxy-D-ribose 5-phosphate. The catalysed reaction is alpha-D-ribose 1-phosphate = D-ribose 5-phosphate. It participates in carbohydrate degradation; 2-deoxy-D-ribose 1-phosphate degradation; D-glyceraldehyde 3-phosphate and acetaldehyde from 2-deoxy-alpha-D-ribose 1-phosphate: step 1/2. Functionally, isomerase that catalyzes the conversion of deoxy-ribose 1-phosphate (dRib-1-P) and ribose 1-phosphate (Rib-1-P) to deoxy-ribose 5-phosphate (dRib-5-P) and ribose 5-phosphate (Rib-5-P), respectively. This is Phosphopentomutase from Elusimicrobium minutum (strain Pei191).